A 488-amino-acid chain; its full sequence is Katanin p60 ATPase-containing subunit A-like 1 (488 aa).

Residue Met1 is modified to N-acetylmethionine. The interval 95–179 (DPAVWPPPVP…GASDSEIPKF (85 aa)) is disordered. Residues 116-127 (PNREVRPLRKDV) are compositionally biased toward basic and acidic residues. The span at 128–138 (GAGARGLVGRA) shows a compositional bias: low complexity. Residues 142 to 167 (SKSDKPASRDKDYRARGRDDKARKNV) show a composition bias toward basic and acidic residues. The residue at position 172 (Ser172) is a Phosphoserine. An ATP-binding site is contributed by 246–253 (GPPGTGKT).

This sequence belongs to the AAA ATPase family. Katanin p60 subunit A1 subfamily. A-like 1 sub-subfamily. In terms of assembly, interacts with KATNB1 and KATNBL1. Widely expressed, including in testis, brain, heart, lung, kidney, liver, spleen, seminal vesicles and ovary. In testis, restricted to Sertoli cells within the seminiferous epithelium (at protein level).

Its subcellular location is the cytoplasm. It is found in the cytoskeleton. The protein resides in the spindle pole. The protein localises to the spindle. The catalysed reaction is n ATP + n H2O + a microtubule = n ADP + n phosphate + (n+1) alpha/beta tubulin heterodimers.. Its function is as follows. Regulates microtubule dynamics in Sertoli cells, a process that is essential for spermiogenesis and male fertility. Severs microtubules in an ATP-dependent manner, promoting rapid reorganization of cellular microtubule arrays. Has microtubule-severing activity in vitro. This Mus musculus (Mouse) protein is Katanin p60 ATPase-containing subunit A-like 1 (Katnal1).